The sequence spans 96 residues: UPF0213 protein BCE_0033 (96 aa).

The GIY-YIG domain maps to 4 to 79 (NKHCFYVVEC…KQLNRKQKEE (76 aa)).

The protein belongs to the UPF0213 family.

The protein is UPF0213 protein BCE_0033 of Bacillus cereus (strain ATCC 10987 / NRS 248).